Here is a 285-residue protein sequence, read N- to C-terminus: MGHRQSVDYTSIPPSELDAHERLPRRKSRFDLFYGWKGIAFLSTLTNVLFISGFFYFGTHLFSPSSSFGHEECHLGSERLWERPVPWKKVVLENHQEFVDGDPWDSKFAGDGTSSNGGAPSPWDSVWLPNWVALENDPAAQGYGFGTPLTGPGSEGNEHDPTPWTPGSQAFGLAVMHQLHCVASIKKAINDYRYTGGHRGSNSSANIGHVDHCVEVLRQATMCHGDMSLIRPNVKGHSYTGYDGWGNEHLCRDWEAIEDIVREHGISFVKGAGMQGWTHLKKGVS.

Residues 32–54 (LFYGWKGIAFLSTLTNVLFISGF) form a helical membrane-spanning segment. Positions 143-165 (YGFGTPLTGPGSEGNEHDPTPWT) are disordered. Residues 177–181 (HQLHC) carry the HXXHC 1 motif. Asn202 carries an N-linked (GlcNAc...) asparagine glycan. Positions 209 to 213 (HVDHC) match the HXXHC 2 motif.

The protein belongs to the ustYa family.

It is found in the membrane. It functions in the pathway mycotoxin biosynthesis. UstYa family oxidase; part of the gene cluster that mediates the biosynthesis of the phomopsins, a group of hexapeptide mycotoxins which infects lupins and causes lupinosis disease in livestock. Within the pathway, phomYe catalyzes the desaturation of the Pro moiety into 3,4-dehydroproline (dPro). The pathway starts with the processing of the precursor phomA by several endopeptidases including kexin proteases as well as the cluster-specific S41 family peptidase phomP1 and the oligopeptidase phomG to produce 10 identical copies of the hexapeptide Tyr-Val-Ile-Pro-Ile-Asp. After being excised from the precursor peptide, the core peptides are cyclized and modified post-translationally by enzymes encoded within the gene cluster. The timing and order of proteolysis of the phomA precursor and PTMs are still unknown. Two tyrosinase-like enzymes, phomQ1 and phomQ2, catalyze the chlorination and hydroxylation of Tyr, respectively. PhomYb, is proposed to be involved in the construction of the macrocyclic structure. The other 4 ustYa family proteins may be involved in PTMs that generate the unique structure of phomopsin A. PhomYa is required for the hydroxylation of C-beta of Tyr. PhomYc, phomYd, and phomYe are responsible for the biosynthesis of 2,3-dehydroisoleucine (dIle), 2,3-dehydroaspartic acid (dAsp), and 3,4-dehydroproline (dPro), respectively. While dIle formation by phomYc is indispensable for the installation of dAsp by phomYd, the order of the other PTMs have not been elucidated yet. Most of the biosynthetic enzymes likely have broad substrate specificity, and thus, there might be a metabolic grid from a precursor to phomopsin A. The enzyme(s) responsible for the biosynthesis of 3,4-dehydrovaline (dVal) have also not been identified yet. Finally, phomM acts as an S-adenosylmethionine-dependent alpha-N-methyltransferase that catalyzes two successive N-methylation reactions, converting N-desmethyl-phomopsin A to phomopsin A and phomopsin A further to an N,N-dimethylated congener called phomopsin E. The protein is UstYa family oxidase phomYe of Diaporthe leptostromiformis (Lupinosis disease fungus).